Consider the following 217-residue polypeptide: Uridylate kinase (217 aa).

6 to 10 (KLSGR) serves as a coordination point for ATP. Gly-38 lines the UMP pocket. Residues Gly-39 and Arg-43 each contribute to the ATP site. Residues Asp-60 and 107 to 113 (FQPGQST) contribute to the UMP site. Asn-134, Tyr-139, and Asp-142 together coordinate ATP.

It belongs to the UMP kinase family. Homohexamer.

It is found in the cytoplasm. It catalyses the reaction UMP + ATP = UDP + ADP. It functions in the pathway pyrimidine metabolism; CTP biosynthesis via de novo pathway; UDP from UMP (UMPK route): step 1/1. Inhibited by UTP. Catalyzes the reversible phosphorylation of UMP to UDP. This is Uridylate kinase from Pyrobaculum aerophilum (strain ATCC 51768 / DSM 7523 / JCM 9630 / CIP 104966 / NBRC 100827 / IM2).